The primary structure comprises 565 residues: Adenine deaminase (565 aa).

The protein belongs to the metallo-dependent hydrolases superfamily. Adenine deaminase family. The cofactor is Mn(2+).

It carries out the reaction adenine + H2O + H(+) = hypoxanthine + NH4(+). This chain is Adenine deaminase, found in Gluconobacter oxydans (strain 621H) (Gluconobacter suboxydans).